The primary structure comprises 194 residues: MEQRLAEFRAARKRAGLVAEPSASSQSTQTSGEKAEAATTPKAPSGWLKRFLVWKPRPPSAQAQPSLAQGAAWPRGLESQPPWSPAEEAPPPPQPPPPQPLTPRDRSLLTSVTLLKVLLWLVLLGLFVELEFGLAYFVLSLFYWMYVGMRGPEEKMQGEKSAYSVFNPGCEAIQGSLTAEQLERELHLRPLPRR.

Residues 1-10 (MEQRLAEFRA) show a composition bias toward basic and acidic residues. Disordered regions lie at residues 1–43 (MEQR…TPKA) and 58–104 (PPSA…LTPR). The Cytoplasmic portion of the chain corresponds to 1 to 116 (MEQRLAEFRA…SLLTSVTLLK (116 aa)). The span at 22-32 (SASSQSTQTSG) shows a compositional bias: polar residues. Residues 82-101 (PWSPAEEAPPPPQPPPPQPL) show a composition bias toward pro residues. The middle helical (MH) stretch occupies residues 102-116 (TPRDRSLLTSVTLLK). Residues 117–137 (VLLWLVLLGLFVELEFGLAYF) constitute an intramembrane region (helical). Residues 138 to 194 (VLSLFYWMYVGMRGPEEKMQGEKSAYSVFNPGCEAIQGSLTAEQLERELHLRPLPRR) lie on the Cytoplasmic side of the membrane.

It belongs to the SAYSD1 family. In terms of assembly, associates (via N-terminus) with ribosomes.

It localises to the endoplasmic reticulum membrane. It is found in the cytoplasmic vesicle membrane. Its function is as follows. Ufmylation 'reader' component of a translocation-associated quality control pathway, a mechanism that takes place when a ribosome has stalled during translation, and which is required to degrade clogged substrates. Specifically recognizes and binds ufmylated ribosomes when a ribosome has stalled, promoting the transport of stalled nascent chain via the TRAPP complex to lysosomes for degradation. The sequence is that of SAYSvFN domain-containing protein 1 (SAYSD1) from Bos taurus (Bovine).